A 357-amino-acid polypeptide reads, in one-letter code: Protein RecA (357 aa).

Gly67 to Thr74 contacts ATP. The interval Leu335–Phe357 is disordered.

It belongs to the RecA family.

It localises to the cytoplasm. In terms of biological role, can catalyze the hydrolysis of ATP in the presence of single-stranded DNA, the ATP-dependent uptake of single-stranded DNA by duplex DNA, and the ATP-dependent hybridization of homologous single-stranded DNAs. It interacts with LexA causing its activation and leading to its autocatalytic cleavage. This chain is Protein RecA, found in Shewanella sp. (strain MR-4).